The primary structure comprises 212 residues: Ras-related protein Rab-15 (212 aa).

GTP-binding residues include serine 17, glycine 18, valine 19, glycine 20, lysine 21, threonine 22, cysteine 23, serine 35, serine 39, and threonine 40. Position 22 (threonine 22) interacts with Mg(2+). 2 short sequence motifs (switch) span residues 31–45 (NEFH…GVDF) and 63–80 (DTAG…YYRR). Mg(2+)-binding residues include threonine 40 and aspartate 63. GTP-binding residues include glycine 66, asparagine 121, lysine 122, aspartate 124, serine 151, and alanine 152. The segment at 192 to 212 (ELEEDEGKPEGPANSSKTCWC) is disordered. 2 S-geranylgeranyl cysteine lipidation sites follow: cysteine 210 and cysteine 212. Residue cysteine 212 is modified to Cysteine methyl ester.

The protein belongs to the small GTPase superfamily. Rab family. In terms of assembly, the GTP bound form of RAB15 interacts with REP15. Interacts (GTP-bound form) with MICAL1, MICAL3, MICALCL, EHBP1 and EHBP1L1. Mg(2+) serves as cofactor.

It localises to the cell membrane. The catalysed reaction is GTP + H2O = GDP + phosphate + H(+). Its activity is regulated as follows. Regulated by guanine nucleotide exchange factors (GEFs) which promote the exchange of bound GDP for free GTP. Regulated by GTPase activating proteins (GAPs) which increase the GTP hydrolysis activity. Inhibited by GDP dissociation inhibitors (GDIs). The small GTPases Rab are key regulators of intracellular membrane trafficking, from the formation of transport vesicles to their fusion with membranes. Rabs cycle between an inactive GDP-bound form and an active GTP-bound form that is able to recruit to membranes different sets of downstream effectors directly responsible for vesicle formation, movement, tethering and fusion. RAB15 may act in concert with RAB3A in regulating aspects of synaptic vesicle membrane flow within the nerve terminal. This is Ras-related protein Rab-15 (RAB15) from Bos taurus (Bovine).